The following is a 306-amino-acid chain: Mitochondrial uncoupling protein 1 (306 aa).

Solcar repeat units lie at residues 9 to 102, 112 to 203, and 212 to 296; these read LSLP…VKNL, VPLS…VKET, and DNVV…AKKY. 6 consecutive transmembrane segments (helical) span residues 15–35, 71–91, 118–138, 177–197, 218–238, and 269–289; these read FACSAFAACVGEVCTIPLDTA, LRSLWKGVVPGLHRQCLFGGL, ILAGLTTGALGIMVANPTDLV, TGLGPNVARNAIINAAELASY, ILSGLGAGFFAVCIGSPVDVV, and YKGFIPNFGRLGSWNVIMFLT.

This sequence belongs to the mitochondrial carrier (TC 2.A.29) family. In terms of tissue distribution, widely expressed.

The protein resides in the mitochondrion inner membrane. PUMPS are mitochondrial transporter proteins that create proton leaks across the inner mitochondrial membrane, thus uncoupling oxidative phosphorylation. This leads to a decrease in the efficiency of oxidative phosphorylation and an increase in heat production. Is involved in protecting plant cells against oxidative stress damage and maintaining the redox balance of the mitochondrial electron transport chain to facilitate photosynthetic metabolism. May play a regulatory role during photorespiration. This Arabidopsis thaliana (Mouse-ear cress) protein is Mitochondrial uncoupling protein 1 (PUMP1).